Here is a 131-residue protein sequence, read N- to C-terminus: Small ribosomal subunit protein uS8 (131 aa).

Belongs to the universal ribosomal protein uS8 family. In terms of assembly, part of the 30S ribosomal subunit. Contacts proteins S5 and S12.

Its function is as follows. One of the primary rRNA binding proteins, it binds directly to 16S rRNA central domain where it helps coordinate assembly of the platform of the 30S subunit. The chain is Small ribosomal subunit protein uS8 from Laribacter hongkongensis (strain HLHK9).